A 272-amino-acid polypeptide reads, in one-letter code: HMP-PP phosphatase (272 aa).

The active-site Nucleophile is the D8. The Mg(2+) site is built by D8, D10, and D212.

Belongs to the HAD-like hydrolase superfamily. Cof family. It depends on Mg(2+) as a cofactor.

The catalysed reaction is 4-amino-2-methyl-5-(diphosphooxymethyl)pyrimidine + H2O = 4-amino-2-methyl-5-(phosphooxymethyl)pyrimidine + phosphate + H(+). Catalyzes the hydrolysis of 4-amino-2-methyl-5-hydroxymethylpyrimidine pyrophosphate (HMP-PP) to 4-amino-2-methyl-5-hydroxymethylpyrimidine phosphate (HMP-P). This chain is HMP-PP phosphatase, found in Enterobacter sp. (strain 638).